We begin with the raw amino-acid sequence, 992 residues long: Ribosome quality control complex subunit NEMF homolog (992 aa).

Positions 214–231 are enriched in basic and acidic residues; the sequence is KETTEETPEAEDKPEKGG. The tract at residues 214 to 245 is disordered; that stretch reads KETTEETPEAEDKPEKGGKKQRKKQQNTKLEQ. 2 coiled-coil regions span residues 331–370 and 481–514; these read STQE…LTKV and SAAQ…VRTI. 2 disordered regions span residues 688-715 and 771-895; these read EVEH…NTEI and GPSR…GDVD. Positions 702–715 are enriched in polar residues; it reads SNINLSEPSSNTEI. The stretch at 774 to 839 forms a coiled coil; it reads RKKQVSAKKT…QDDEEREIRM (66 aa). Over residues 782–796 the composition is skewed to basic and acidic residues; that stretch reads KTKEDKARAKQEAAK. The span at 814–825 shows a compositional bias: basic residues; it reads RGQKGKLKKMKQ. Residues 845-874 are compositionally biased toward basic and acidic residues; the sequence is SGKEKPQASADKVVEKSESTKEYVKPEKSA.

Belongs to the NEMF family. In terms of assembly, component of the ribosome quality control complex (RQC), composed of at least the E3 ubiquitin ligase l(3)76BDr/LTN1 and Clbn/NEMF associated with the 60S ribosomal subunit. The complex probably also contains TCF25 as well as TER94/VCP and its ubiquitin-binding cofactors. Interacts (via its C-terminus) with pros (via its homeobox). Interacts (via its N-terminus) with emb. Expressed in enterocytes (at protein level).

It localises to the nucleus. Its subcellular location is the cytoplasm. It is found in the mitochondrion outer membrane. Its function is as follows. Key component of the ribosome quality control complex (RQC), a ribosome-associated complex that mediates the extraction of incompletely synthesized nascent chains from stalled ribosomes as well as their ubiquitin-mediated proteasomal degradation. Thereby, frees 60S subunit ribosomes from the stalled translation complex and prevents the accumulation of nascent polypeptide chains that are potentially toxic for the cell. Within the RQC complex, Clbn/NEMF specifically binds stalled 60S ribosomal subunits by recognizing an exposed, nascent chain-conjugated tRNA moiety. Following binding to stalled 60S ribosomal subunits, Clbn/NEMF mediates CAT tailing by recruiting alanine-charged tRNA to the A-site and directing the elongation of stalled nascent chains independently of mRNA or 40S subunits, leading to non-templated C-terminal alanine extensions (CAT tails). On mitochondrial surface, plays a role in mitochondrial-stress induced translational termination impairment and protein carboxyl terminal extension (MISTERMINATE). Plays a role in regulating nuclear transport possibly through directly binding to both emb and cargo proteins. Plays a role in the regulation of G1-to-S cell cycle transition. Regulates S phase checkpoint by antagonizing E2F1 activity. Together with hid and tefu/ATM, plays a role in DNA damage-induced apoptosis through both p53-dependent and -independent activity. Plays an essential role in the regulation of mitochondrial structure and redox state in enterocytes which is essential for the control of intestinal stem cells proliferation and intestinal homeostasis. In Drosophila melanogaster (Fruit fly), this protein is Ribosome quality control complex subunit NEMF homolog.